A 147-amino-acid polypeptide reads, in one-letter code: Nucleoside diphosphate kinase (147 aa).

Residues Lys9, Phe57, Arg85, Thr91, Arg102, and Asn112 each coordinate ATP. His115 acts as the Pros-phosphohistidine intermediate in catalysis.

Belongs to the NDK family. Homotetramer. Requires Mg(2+) as cofactor.

The protein localises to the cytoplasm. It catalyses the reaction a 2'-deoxyribonucleoside 5'-diphosphate + ATP = a 2'-deoxyribonucleoside 5'-triphosphate + ADP. The enzyme catalyses a ribonucleoside 5'-diphosphate + ATP = a ribonucleoside 5'-triphosphate + ADP. Functionally, major role in the synthesis of nucleoside triphosphates other than ATP. The ATP gamma phosphate is transferred to the NDP beta phosphate via a ping-pong mechanism, using a phosphorylated active-site intermediate. The sequence is that of Nucleoside diphosphate kinase from Brevibacillus brevis (strain 47 / JCM 6285 / NBRC 100599).